The following is a 247-amino-acid chain: 5'-nucleotidase SurE (247 aa).

The a divalent metal cation site is built by aspartate 8, aspartate 9, serine 39, and asparagine 91.

Belongs to the SurE nucleotidase family. It depends on a divalent metal cation as a cofactor.

It localises to the cytoplasm. It catalyses the reaction a ribonucleoside 5'-phosphate + H2O = a ribonucleoside + phosphate. Nucleotidase that shows phosphatase activity on nucleoside 5'-monophosphates. The protein is 5'-nucleotidase SurE of Chromobacterium violaceum (strain ATCC 12472 / DSM 30191 / JCM 1249 / CCUG 213 / NBRC 12614 / NCIMB 9131 / NCTC 9757 / MK).